A 370-amino-acid polypeptide reads, in one-letter code: Protein STRICTOSIDINE SYNTHASE-LIKE 9 (370 aa).

The N-terminal stretch at 1 to 26 (MPINQKIPTWFAVPAVFAVLSVISYQ) is a signal peptide. Asn-97 and Asn-171 each carry an N-linked (GlcNAc...) asparagine glycan.

It belongs to the strictosidine synthase family.

Its subcellular location is the vacuole. The chain is Protein STRICTOSIDINE SYNTHASE-LIKE 9 from Arabidopsis thaliana (Mouse-ear cress).